Consider the following 305-residue polypeptide: Outer membrane protein assembly factor BamD (305 aa).

The first 24 residues, Met1–Gly24, serve as a signal peptide directing secretion. Cys25 carries the N-palmitoyl cysteine lipid modification. The S-diacylglycerol cysteine moiety is linked to residue Cys25. TPR repeat units lie at residues Val41 to Ser74, Arg78 to Asn111, Ser113 to Gln136, and Ala174 to Thr207.

Belongs to the BamD family. In terms of assembly, part of the Bam complex.

It is found in the cell outer membrane. In terms of biological role, part of the outer membrane protein assembly complex, which is involved in assembly and insertion of beta-barrel proteins into the outer membrane. The chain is Outer membrane protein assembly factor BamD from Caulobacter vibrioides (strain ATCC 19089 / CIP 103742 / CB 15) (Caulobacter crescentus).